We begin with the raw amino-acid sequence, 262 residues long: Acyl-[acyl-carrier-protein]--UDP-N-acetylglucosamine O-acyltransferase (262 aa).

It belongs to the transferase hexapeptide repeat family. LpxA subfamily. As to quaternary structure, homotrimer.

Its subcellular location is the cytoplasm. The enzyme catalyses a (3R)-hydroxyacyl-[ACP] + UDP-N-acetyl-alpha-D-glucosamine = a UDP-3-O-[(3R)-3-hydroxyacyl]-N-acetyl-alpha-D-glucosamine + holo-[ACP]. It functions in the pathway glycolipid biosynthesis; lipid IV(A) biosynthesis; lipid IV(A) from (3R)-3-hydroxytetradecanoyl-[acyl-carrier-protein] and UDP-N-acetyl-alpha-D-glucosamine: step 1/6. Involved in the biosynthesis of lipid A, a phosphorylated glycolipid that anchors the lipopolysaccharide to the outer membrane of the cell. The chain is Acyl-[acyl-carrier-protein]--UDP-N-acetylglucosamine O-acyltransferase from Salmonella typhi.